Reading from the N-terminus, the 1479-residue chain is C-type mannose receptor 2 (1479 aa).

The signal sequence occupies residues 1–30 (MGPGRPAPAPWPRHLLRCVLLLGCLHLGRP). At 31–1414 (GAPGDAALPE…PSALPENPAA (1384 aa)) the chain is on the extracellular side. A Ricin B-type lectin domain is found at 41-167 (PNVFLIFSHG…WRIYGSEEDL (127 aa)). An intrachain disulfide couples Cys54 to Cys68. Asn69 carries an N-linked (GlcNAc...) (complex) asparagine glycan. Cys93 and Cys112 are oxidised to a cystine. N-linked (GlcNAc...) asparagine glycosylation is present at Asn140. The Fibronectin type-II domain occupies 182–230 (SHGKPCTIPFKYDNQWFHGCTSTGREDGHLWCATTQDYGKDERWGFCPI). Intrachain disulfides connect Cys187-Cys213, Cys201-Cys228, Cys266-Cys359, and Cys335-Cys351. The C-type lectin 1 domain occupies 244 to 360 (LTDSCYQFNF…CSIALPYVCK (117 aa)). N-linked (GlcNAc...) asparagine glycosylation occurs at Asn364. 4 consecutive C-type lectin domains span residues 389–505 (FQGH…SICK), 528–644 (HSPS…RYIC), 678–809 (KLRY…WICK), and 832–951 (FQEA…YICK). Intrachain disulfides connect Cys410–Cys504 and Cys481–Cys496. An N-linked (GlcNAc...) asparagine glycan is attached at Asn588. Intrachain disulfides connect Cys618–Cys635, Cys704–Cys808, Cys785–Cys800, Cys853–Cys950, and Cys927–Cys942. Asn954 and Asn1029 each carry an N-linked (GlcNAc...) asparagine glycan. C-type lectin domains lie at 979–1107 (FLNK…GFIC), 1132–1243 (YLNG…GAVC), and 1273–1393 (FREH…GVVC). Cys1078 and Cys1098 are joined by a disulfide. Lys1142 participates in a covalent cross-link: Glycyl lysine isopeptide (Lys-Gly) (interchain with G-Cter in SUMO1). An intrachain disulfide couples Cys1220 to Cys1234. Asn1350 is a glycosylation site (N-linked (GlcNAc...) asparagine). Cysteines 1369 and 1384 form a disulfide. The chain crosses the membrane as a helical span at residues 1415-1435 (LVVVLMAVLLLLALLTAALIL). Topologically, residues 1436–1479 (YRRRQSIERGAFEGARYSRSSSSPTEATEKNILVSDMEMNEQQE) are cytoplasmic. The tract at residues 1450 to 1479 (ARYSRSSSSPTEATEKNILVSDMEMNEQQE) is disordered.

As to quaternary structure, interacts with C-terminal region of type I collagen/COL1A1. Interacts directly with PLAUR/UPAR and PLAU/pro-UPA to form a tri-molecular complex. Interacts with collagen V. In terms of processing, N-glycosylated. In terms of tissue distribution, ubiquitous with low expression in brain, placenta, lung, kidney, pancreas, spleen, thymus and colon. Expressed in endothelial cells, fibroblasts and macrophages. Highly expressed in fetal lung and kidney.

The protein localises to the membrane. In terms of biological role, may play a role as endocytotic lectin receptor displaying calcium-dependent lectin activity. Internalizes glycosylated ligands from the extracellular space for release in an endosomal compartment via clathrin-mediated endocytosis. May be involved in plasminogen activation system controlling the extracellular level of PLAUR/PLAU, and thus may regulate protease activity at the cell surface. May contribute to cellular uptake, remodeling and degradation of extracellular collagen matrices. May play a role during cancer progression as well as in other chronic tissue destructive diseases acting on collagen turnover. May participate in remodeling of extracellular matrix cooperating with the matrix metalloproteinases (MMPs). This chain is C-type mannose receptor 2 (MRC2), found in Homo sapiens (Human).